The following is a 1323-amino-acid chain: Regulatory protein ADR1 (1323 aa).

Serine 54 carries the phosphoserine modification. 2 C2H2-type zinc fingers span residues 104–126 (FVCEVCTRAFARQEHLKRHYRSH) and 132–155 (YPCGLCNRCFTRRDLLIRHAQKIH). Residues 175–216 (KARKNSASSVKFQTPTYGTPDNGNFLNRTTANTRRKASPEAN) form a disordered region. The span at 179-206 (NSASSVKFQTPTYGTPDNGNFLNRTTAN) shows a compositional bias: polar residues. 2 positions are modified to phosphothreonine: threonine 188 and threonine 193. At serine 230 the chain carries Phosphoserine; by PKA; in vitro. Serine 258 is modified (phosphoserine). Threonine 259 carries the phosphothreonine modification. Phosphoserine is present on residues serine 299, serine 323, and serine 325. Threonine 327 bears the Phosphothreonine mark.

In terms of processing, phosphorylation at Ser-230 by cAMP-dependent protein kinase A does not affect DNA binding but appears to prevent transcription of ADH2 during glucose repression.

It localises to the nucleus. Functionally, required for transcriptional activation of glucose-repressible alcohol dehydrogenase (ADH2). This is Regulatory protein ADR1 (ADR1) from Saccharomyces cerevisiae (strain ATCC 204508 / S288c) (Baker's yeast).